A 350-amino-acid polypeptide reads, in one-letter code: Enoyl-[acyl-carrier-protein] reductase, mitochondrial (350 aa).

Residues 1–14 (MNSTRNIISLVRRY) constitute a mitochondrion transit peptide. Tyr-69 acts as the Proton donor in catalysis. NADP(+) is bound by residues Asn-143, 169 to 172 (NSMV), 192 to 194 (RDG), 261 to 264 (YGGM), 286 to 288 (FWL), and Lys-343.

The protein belongs to the zinc-containing alcohol dehydrogenase family. Quinone oxidoreductase subfamily. Homodimer.

It localises to the mitochondrion. The enzyme catalyses a 2,3-saturated acyl-[ACP] + NADP(+) = a (2E)-enoyl-[ACP] + NADPH + H(+). Functionally, catalyzes the NADPH-dependent reduction of trans-2-enoyl thioesters in mitochondrial fatty acid synthesis (fatty acid synthesis type II). Fatty acid chain elongation in mitochondria uses acyl carrier protein (ACP) as an acyl group carrier, but the enzyme accepts both ACP and CoA thioesters as substrates in vitro. The chain is Enoyl-[acyl-carrier-protein] reductase, mitochondrial (mecr) from Dictyostelium discoideum (Social amoeba).